Consider the following 314-residue polypeptide: Basic leucine zipper 63 (314 aa).

Position 29 is a phosphoserine; by KIN10 (serine 29). Residues 94–177 are disordered; sequence KPQDTSGRSD…SRRRKQAHLS (84 aa). Polar residues predominate over residues 96 to 133; it reads QDTSGRSDNGGANESEQASLASSKATPMMSSAITSGSE. Residues 151–214 enclose the bZIP domain; that stretch reads NVKRVKRMLS…NDASVENRVL (64 aa). The basic motif stretch occupies residues 153 to 172; the sequence is KRVKRMLSNRESARRSRRRK. A Nuclear localization signal 1 motif is present at residues 155-162; sequence VKRMLSNR. The leucine-zipper stretch occupies residues 179–193; sequence LETQVSQLRVENSKL. A disordered region spans residues 253-274; sequence SLPSETSNSPDTTSSQVTTPEI. A phosphoserine; by KIN10 mark is found at serine 294 and serine 300. The Nuclear localization signal 2 motif lies at 295–302; sequence MRRVESLE.

This sequence belongs to the bZIP family. In terms of assembly, homodimer. Forms a heterodimer with LSD1, BZIP1, BZIP2, BZIP9, BZIP10, BZIP11, BZIP25, BZIP44 and BZIP53. Interacts with KIN10 and SNF4. Component of a ternary complex composed of BZIP2-BZIP63 heterodimer and KIN10. In terms of processing, phosphorylated. The phosphorylation at Ser-29, Ser-294 and Ser-300 by KIN10 strongly enhances its ability to form homo- as well as heterodimers and are then essential for its transcriptional activity. In terms of tissue distribution, expressed in roots, shoots, young leaves, pollen, and flowers.

The protein resides in the nucleus. Its activity is regulated as follows. Up-regulated by KIN10 under a phosphorylation-dependent manner. In terms of biological role, transcription factor involved in controlling responses to starvation. BZIP2-BZIP63-KIN10 complex binds to the ETFQO promoter to up-regulate its transcription. This Arabidopsis thaliana (Mouse-ear cress) protein is Basic leucine zipper 63 (BZIP63).